A 300-amino-acid polypeptide reads, in one-letter code: Cyclic nucleotide synthase CdnE01 (300 aa).

Positions 63, 65, and 137 each coordinate Mg(2+).

This sequence belongs to the CD-NTase family. E01 subfamily. The cofactor is Mg(2+).

Its activity is regulated as follows. Binds to and probably activated by a virus-derived, approximately 400 nucleotide RNA (called CBASS-activating bacteriophage RNA, cabRNA) that begins in the viral terminase subunit terS and extends into terL, as well as by a shorter RNA with part of the cabRNA sequence able to form a hairpin. RNA secondary and/or tertiary structure, as well as viral infection itself, are important for CdnE activation. Cyclic nucleotide synthase (second messenger synthase) of a CBASS antivirus system. CBASS (cyclic oligonucleotide-based antiphage signaling system) provides immunity against bacteriophage. The CD-NTase protein synthesizes cyclic nucleotides in response to infection; these serve as specific second messenger signals. The signals activate a diverse range of effectors, leading to bacterial cell death and thus abortive phage infection. A type I-B CBASS system. Its function is as follows. Protects S.aureus against phage infection. When the CBASS operon (cdnE and the following gene) is introduced in S.aureus strain RN4220 there is strong protection against lytic DNA phages 80alpha-vir and phi-NM1-gamma-6 but little to no protection against phages phi-NM4-gamma-4 or phi-12-gamma-3. This is Cyclic nucleotide synthase CdnE01 from Staphylococcus haemolyticus.